A 92-amino-acid polypeptide reads, in one-letter code: uncharacterized protein (92 aa).

This is an uncharacterized protein from Saccharomyces cerevisiae (strain ATCC 204508 / S288c) (Baker's yeast).